The chain runs to 115 residues: Large ribosomal subunit protein P2z (115 aa).

The tract at residues 62 to 115 is disordered; it reads LASVPSGGGGGVAVASATSGGGGGGGAPAAESKKEEKKEEKEESDDDMGFSLFE. The segment covering 92–102 has biased composition (basic and acidic residues); that stretch reads ESKKEEKKEEK. A Phosphoserine modification is found at Ser105.

Belongs to the eukaryotic ribosomal protein P1/P2 family. In terms of assembly, P1 and P2 exist as dimers at the large ribosomal subunit. Phosphorylated.

Functionally, plays an important role in the elongation step of protein synthesis. The polypeptide is Large ribosomal subunit protein P2z (RPP2A) (Arabidopsis thaliana (Mouse-ear cress)).